The sequence spans 850 residues: PH domain-containing protein YHR131C (850 aa).

The 113-residue stretch at 194–306 (RIHSDLVHRS…MYLSIGISVS (113 aa)) folds into the PH domain. Residues 324–338 (RRRRRRRRRRRRHTH) show a composition bias toward basic residues. Disordered regions lie at residues 324 to 348 (RRRR…GSFS), 406 to 428 (SAAS…SGCS), 451 to 494 (SSRT…GVPV), 583 to 659 (EASI…TDDS), and 793 to 850 (TTKD…QITA). Low complexity predominate over residues 406-416 (SAASGESSDNS). A compositionally biased stretch (polar residues) spans 417-428 (TLGSTRSLSGCS). Positions 479 to 489 (HHESSGGDHPE) are enriched in basic and acidic residues. Residues 605 to 619 (ESATDLSQSSRSLCL) show a composition bias toward polar residues. 2 stretches are compositionally biased toward acidic residues: residues 626-658 (INDD…DTDD) and 799-850 (DHGE…QITA).

It localises to the cytoplasm. In Saccharomyces cerevisiae (strain ATCC 204508 / S288c) (Baker's yeast), this protein is PH domain-containing protein YHR131C.